The chain runs to 368 residues: Phosphate acyltransferase (368 aa).

Residues 334–368 are disordered; it reads AAPLGESGRDADGAGQASPSAGQPAEPSAALSSKT.

Belongs to the PlsX family. In terms of assembly, homodimer. Probably interacts with PlsY.

Its subcellular location is the cytoplasm. It carries out the reaction a fatty acyl-[ACP] + phosphate = an acyl phosphate + holo-[ACP]. Its pathway is lipid metabolism; phospholipid metabolism. Catalyzes the reversible formation of acyl-phosphate (acyl-PO(4)) from acyl-[acyl-carrier-protein] (acyl-ACP). This enzyme utilizes acyl-ACP as fatty acyl donor, but not acyl-CoA. The chain is Phosphate acyltransferase from Burkholderia thailandensis (strain ATCC 700388 / DSM 13276 / CCUG 48851 / CIP 106301 / E264).